Reading from the N-terminus, the 322-residue chain is Phosphatidylserine decarboxylase proenzyme (322 aa).

Catalysis depends on charge relay system; for autoendoproteolytic cleavage activity residues aspartate 90, histidine 147, and serine 254. Catalysis depends on serine 254, which acts as the Schiff-base intermediate with substrate; via pyruvic acid; for decarboxylase activity. A Pyruvic acid (Ser); by autocatalysis modification is found at serine 254. The segment at 293–322 is disordered; the sequence is PDAEPAPLPAEEIEAEHDASPLVDDKKDQV. Residues 308 to 322 are compositionally biased toward basic and acidic residues; sequence EHDASPLVDDKKDQV.

It belongs to the phosphatidylserine decarboxylase family. PSD-B subfamily. Prokaryotic type I sub-subfamily. In terms of assembly, heterodimer of a large membrane-associated beta subunit and a small pyruvoyl-containing alpha subunit. The cofactor is pyruvate. Post-translationally, is synthesized initially as an inactive proenzyme. Formation of the active enzyme involves a self-maturation process in which the active site pyruvoyl group is generated from an internal serine residue via an autocatalytic post-translational modification. Two non-identical subunits are generated from the proenzyme in this reaction, and the pyruvate is formed at the N-terminus of the alpha chain, which is derived from the carboxyl end of the proenzyme. The autoendoproteolytic cleavage occurs by a canonical serine protease mechanism, in which the side chain hydroxyl group of the serine supplies its oxygen atom to form the C-terminus of the beta chain, while the remainder of the serine residue undergoes an oxidative deamination to produce ammonia and the pyruvoyl prosthetic group on the alpha chain. During this reaction, the Ser that is part of the protease active site of the proenzyme becomes the pyruvoyl prosthetic group, which constitutes an essential element of the active site of the mature decarboxylase.

The protein localises to the cell membrane. The catalysed reaction is a 1,2-diacyl-sn-glycero-3-phospho-L-serine + H(+) = a 1,2-diacyl-sn-glycero-3-phosphoethanolamine + CO2. It participates in phospholipid metabolism; phosphatidylethanolamine biosynthesis; phosphatidylethanolamine from CDP-diacylglycerol: step 2/2. Functionally, catalyzes the formation of phosphatidylethanolamine (PtdEtn) from phosphatidylserine (PtdSer). This is Phosphatidylserine decarboxylase proenzyme from Escherichia coli O45:K1 (strain S88 / ExPEC).